Here is a 94-residue protein sequence, read N- to C-terminus: Pyrimidine/purine nucleoside phosphorylase (94 aa).

Belongs to the nucleoside phosphorylase PpnP family.

It catalyses the reaction a purine D-ribonucleoside + phosphate = a purine nucleobase + alpha-D-ribose 1-phosphate. It carries out the reaction adenosine + phosphate = alpha-D-ribose 1-phosphate + adenine. The enzyme catalyses cytidine + phosphate = cytosine + alpha-D-ribose 1-phosphate. The catalysed reaction is guanosine + phosphate = alpha-D-ribose 1-phosphate + guanine. It catalyses the reaction inosine + phosphate = alpha-D-ribose 1-phosphate + hypoxanthine. It carries out the reaction thymidine + phosphate = 2-deoxy-alpha-D-ribose 1-phosphate + thymine. The enzyme catalyses uridine + phosphate = alpha-D-ribose 1-phosphate + uracil. The catalysed reaction is xanthosine + phosphate = alpha-D-ribose 1-phosphate + xanthine. Functionally, catalyzes the phosphorolysis of diverse nucleosides, yielding D-ribose 1-phosphate and the respective free bases. Can use uridine, adenosine, guanosine, cytidine, thymidine, inosine and xanthosine as substrates. Also catalyzes the reverse reactions. The polypeptide is Pyrimidine/purine nucleoside phosphorylase (Alcanivorax borkumensis (strain ATCC 700651 / DSM 11573 / NCIMB 13689 / SK2)).